The chain runs to 322 residues: Sideroflexin-1 (322 aa).

The residue at position 2 (Ser-2) is an N-acetylserine. Residues 2-102 (SGELPPNINI…MSAQVPMNMT (101 aa)) are Mitochondrial matrix-facing. Residues 103 to 120 (ITGCMMTFYRTTPAVLFW) form a helical membrane-spanning segment. The Mitochondrial intermembrane portion of the chain corresponds to 121–146 (QWINQSFNAVVNYTNRSGDAPLTVNE). The chain crosses the membrane as a helical span at residues 147–167 (LGTAYVSATTGAVATALGLNA). At 168–174 (LTKHVSP) the chain is on the mitochondrial matrix side. A helical membrane pass occupies residues 175–195 (LIGRFVPFAAVAAANCINIPL). Residues 196 to 228 (MRQRELKVGIPVTDENGNRLGESANAAKQAITQ) lie on the Mitochondrial intermembrane side of the membrane. The chain crosses the membrane as a helical span at residues 229–249 (VVVSRILMAAPGMAIPPFIMN). The Mitochondrial matrix segment spans residues 250-266 (TLEKKAFLKRFPWMSAP). The helical transmembrane segment at 267–287 (VQVGIVGFCLVFATPLCCALF) threads the bilayer. Residues 288–322 (PQKSSMSVTSLEAELQARIRETYPELRRVYFNKGL) lie on the Mitochondrial intermembrane side of the membrane.

The protein belongs to the sideroflexin family.

The protein resides in the mitochondrion inner membrane. The catalysed reaction is L-serine(in) = L-serine(out). The enzyme catalyses L-alanine(in) = L-alanine(out). It catalyses the reaction L-cysteine(in) = L-cysteine(out). Amino acid transporter importing serine, an essential substrate of the mitochondrial branch of the one-carbon pathway, into mitochondria. Mitochondrial serine is then converted to glycine and formate, which exits to the cytosol where it is used to generate the charged folates that serve as one-carbon donors. May also transport other amino acids including alanine and cysteine. In Bos taurus (Bovine), this protein is Sideroflexin-1 (SFXN1).